The following is a 178-amino-acid chain: ATP-dependent protease subunit HslV (178 aa).

Thr-2 is a catalytic residue. 3 residues coordinate Na(+): Ser-159, Cys-162, and Thr-165.

It belongs to the peptidase T1B family. HslV subfamily. In terms of assembly, a double ring-shaped homohexamer of HslV is capped on each side by a ring-shaped HslU homohexamer. The assembly of the HslU/HslV complex is dependent on binding of ATP.

The protein resides in the cytoplasm. The catalysed reaction is ATP-dependent cleavage of peptide bonds with broad specificity.. Allosterically activated by HslU binding. In terms of biological role, protease subunit of a proteasome-like degradation complex believed to be a general protein degrading machinery. The sequence is that of ATP-dependent protease subunit HslV from Buchnera aphidicola subsp. Cinara cedri (strain Cc).